The primary structure comprises 193 residues: Ribonuclease HII (193 aa).

The RNase H type-2 domain maps to M1–S193. D6, E7, and D103 together coordinate a divalent metal cation.

Belongs to the RNase HII family. It depends on Mn(2+) as a cofactor. The cofactor is Mg(2+).

It localises to the cytoplasm. It catalyses the reaction Endonucleolytic cleavage to 5'-phosphomonoester.. Endonuclease that specifically degrades the RNA of RNA-DNA hybrids. This is Ribonuclease HII from Helicobacter acinonychis (strain Sheeba).